The chain runs to 328 residues: MIEKIWSGESPLWRLLLPLSWLYGLVSGAIRLCYKLKLKRAWRAPVPVVVVGNLTAGGNGKTPVVVWLVEQLQQRGICVGVVSRGYGGKAESYPLLLSADTTTAQAGDEPVLIYQRTDAPVAVSPVRSDAIKAILAQHPDVQIIVTDDGLQHYRLARDVEIVVIDGVRRFGNGWWLPAGPMRERAGRLKSVDAVIVNGGVPRSGEIPMHLLPGQAVNLRTGTRCDVAQLEHVVAMAGIGHPPRFFATLKMCGVQPEKCVPLADHQSLNHADVSALVSAGQTLVMTEKDAVKCRAFAEENWWYLPVDAQLSGDEPAKLLAQLTSLASGN.

T55–T62 provides a ligand contact to ATP.

It belongs to the LpxK family.

The catalysed reaction is a lipid A disaccharide + ATP = a lipid IVA + ADP + H(+). It functions in the pathway glycolipid biosynthesis; lipid IV(A) biosynthesis; lipid IV(A) from (3R)-3-hydroxytetradecanoyl-[acyl-carrier-protein] and UDP-N-acetyl-alpha-D-glucosamine: step 6/6. Functionally, transfers the gamma-phosphate of ATP to the 4'-position of a tetraacyldisaccharide 1-phosphate intermediate (termed DS-1-P) to form tetraacyldisaccharide 1,4'-bis-phosphate (lipid IVA). The protein is Tetraacyldisaccharide 4'-kinase of Escherichia coli (strain SMS-3-5 / SECEC).